A 315-amino-acid chain; its full sequence is MEEMSGDSVVSSAVPAAATRTTSFKGASPSSKYVKLNVGGALYYTTMQTLTKQDTMLKAMFSGRMEVLTDSEGWILIDRCGKHFGTILNYLRDGGVPLPESRREIEELLAEAKYYLVQGLLEECQAALQNKDTYEPFCKVPVITSSKEEQRLIATSNKPAVKLLYNRSNNKYSYTSNSDDNMLKNIELFDKLSLRFNGRVLFIKDVIGDEICCWSFYGQGRKIAEVCCTSIVYATEKKQTKVEFPEARIYEETLNILLYEAQDGRGPDNALLEATGGAAGRSHHLDEDEERERERIERVRRIHIKRPDDRAHLHQ.

M1 bears the N-acetylmethionine mark. The residue at position 23 (S23) is a Phosphoserine. The region spanning 32-100 (KYVKLNVGGA…LRDGGVPLPE (69 aa)) is the BTB domain. The PCNA-binding motif lies at 239–245 (QTKVEFP). The segment at 269 to 294 (NALLEATGGAAGRSHHLDEDEERERE) is disordered.

Belongs to the BACURD family. As to quaternary structure, homotetramer; forms a two-fold symmetric tetramer in solution. Interacts with CUL3; interaction is direct and forms a 5:5 heterodecamer. Component of the BCR(BACURD3) E3 ubiquitin ligase complex, at least composed of CUL3, KCTD10/BACURD3 and RBX1. Interacts with DNA polymerase delta subunit 2/POLD2. Interacts with PCNA. Associated with the tectonic-like complex (also named B9 complex); however as Kctd10 has not been identified in all tectonic-like complexes purifications it is unclear whether it is really part of the complex.

It is found in the nucleus. Its pathway is protein modification; protein ubiquitination. Functionally, substrate-specific adapter of a BCR (BTB-CUL3-RBX1) E3 ubiquitin-protein ligase complex. The BCR(BACURD3) E3 ubiquitin ligase complex mediates the ubiquitination of target proteins, leading to their degradation by the proteasome. This chain is BTB/POZ domain-containing adapter for CUL3-mediated RhoA degradation protein 3 (Kctd10), found in Mus musculus (Mouse).